Consider the following 95-residue polypeptide: Cystatin-A2 (95 aa).

Residues 47–51 carry the Secondary area of contact motif; that stretch reads QLVNG.

The protein belongs to the cystatin family.

Its subcellular location is the cytoplasm. In terms of biological role, intracellular thiol proteinase inhibitor. Inhibits cathepsin B, but not papain. In Dictyostelium discoideum (Social amoeba), this protein is Cystatin-A2 (cpiB).